Reading from the N-terminus, the 253-residue chain is Precorrin-4 C(11)-methyltransferase (253 aa).

Belongs to the precorrin methyltransferase family.

It catalyses the reaction precorrin-4 + S-adenosyl-L-methionine = precorrin-5 + S-adenosyl-L-homocysteine. The protein operates within cofactor biosynthesis; adenosylcobalamin biosynthesis; cob(II)yrinate a,c-diamide from precorrin-2 (aerobic route): step 4/10. Its function is as follows. Catalyzes the methylation of C-11 in precorrin-4 to form precorrin-5. The sequence is that of Precorrin-4 C(11)-methyltransferase (cobM) from Sinorhizobium sp.